Consider the following 131-residue polypeptide: uncharacterized protein (131 aa).

2 consecutive transmembrane segments (helical) span residues 5-25 (VQPI…YVLV) and 34-54 (MAVT…YVMN). Positions 62 to 131 (AAFKKAAKQS…KNKKKNRALF (70 aa)) are disordered. Basic residues-rich tracts occupy residues 66-92 (KAAK…RVSH) and 122-131 (KNKKKNRALF).

Its subcellular location is the cell membrane. This is an uncharacterized protein from Bacillus subtilis (strain 168).